A 257-amino-acid chain; its full sequence is MDVCVIDHPLAAARLTVLRDERTDTAGFRAALRDLTLMLVYEASRDAPRKSVRIRTPVAAAAGTRLVNPPLLVPVLRAGLGMVDPAQAALPEAEVGFVGVARDEQTHRPVPYLAALPDKLAGRPVMVLDPMLATGGSMAHTLGLLQRRGATDITVLCVVAAPEGLAAVGETAPDARVFTAAVDKGLNKAAYIVPGLGDAGDRQFGPNLFTSSAPSRPEAPAGRGRAAAKTPGRRSARSESPSSTSPSARSRKAAPPA.

Residues arginine 77, arginine 102, and 129–137 contribute to the 5-phospho-alpha-D-ribose 1-diphosphate site; that span reads DPMLATGGS. Residues isoleucine 192 and 197-199 each bind uracil; that span reads GDA. A 5-phospho-alpha-D-ribose 1-diphosphate-binding site is contributed by aspartate 198. The interval 203–257 is disordered; the sequence is QFGPNLFTSSAPSRPEAPAGRGRAAAKTPGRRSARSESPSSTSPSARSRKAAPPA. 2 stretches are compositionally biased toward low complexity: residues 211-230 and 238-248; these read SSAPSRPEAPAGRGRAAAKT and SESPSSTSPSA.

This sequence belongs to the UPRTase family. It depends on Mg(2+) as a cofactor.

It catalyses the reaction UMP + diphosphate = 5-phospho-alpha-D-ribose 1-diphosphate + uracil. Its pathway is pyrimidine metabolism; UMP biosynthesis via salvage pathway; UMP from uracil: step 1/1. Allosterically activated by GTP. Functionally, catalyzes the conversion of uracil and 5-phospho-alpha-D-ribose 1-diphosphate (PRPP) to UMP and diphosphate. This chain is Uracil phosphoribosyltransferase, found in Mycolicibacterium paratuberculosis (strain ATCC BAA-968 / K-10) (Mycobacterium paratuberculosis).